The sequence spans 182 residues: Succinate dehydrogenase [ubiquinone] cytochrome b small subunit, mitochondrial (182 aa).

Over 1 to 71 the chain is Mitochondrial matrix; it reads MSLSLLLRGA…SAPRMASAGS (71 aa). Residues 72–96 form a helical membrane-spanning segment; it reads SHTLLWTVERIVSAGLLAVIPAAFI. Residues 97-101 lie on the Mitochondrial intermembrane side of the membrane; that stretch reads APSQV. A helical transmembrane segment spans residues 102–122; sequence LDALMAISVVIHTHWGVEAMV. Residue His-113 participates in heme binding. The Mitochondrial matrix segment spans residues 123-135; the sequence is VDYMRPSVVGNVL. Tyr-125 contributes to the a ubiquinone binding site. A helical transmembrane segment spans residues 136-157; it reads PKVAHIALIIISVATLGGLFYF. Over 158-182 the chain is Mitochondrial intermembrane; the sequence is IQNDVGLANGIKRFWAIKGKDAEKA.

It belongs to the CybS family. Forms part of complex II containing four subunits: a flavoprotein (FP), an iron-sulfur protein (IP) and a cytochrome b composed of a large and a small subunit.

It is found in the mitochondrion inner membrane. Its pathway is carbohydrate metabolism; tricarboxylic acid cycle. Functionally, membrane-anchoring subunit of succinate dehydrogenase (SDH) that is involved in complex II of the mitochondrial electron transport chain and is responsible for transferring electrons from succinate to ubiquinone (coenzyme Q). This is Succinate dehydrogenase [ubiquinone] cytochrome b small subunit, mitochondrial from Drosophila melanogaster (Fruit fly).